A 62-amino-acid chain; its full sequence is Small ribosomal subunit protein uS14 (62 aa).

C25, C28, C41, and C44 together coordinate Zn(2+).

The protein belongs to the universal ribosomal protein uS14 family. Zinc-binding uS14 subfamily. Part of the 30S ribosomal subunit. Contacts proteins S3 and S10. Zn(2+) is required as a cofactor.

In terms of biological role, binds 16S rRNA, required for the assembly of 30S particles and may also be responsible for determining the conformation of the 16S rRNA at the A site. The polypeptide is Small ribosomal subunit protein uS14 (Hydrogenobaculum sp. (strain Y04AAS1)).